The following is a 785-amino-acid chain: E3 UFM1-protein ligase 1 homolog (785 aa).

Positions 405–483 (ASFQDQDDDG…GGGGGNKKTV (79 aa)) are disordered.

The protein belongs to the UFL1 family.

In terms of biological role, E3 UFM1-protein ligase that mediates ufmylation of target proteins. The polypeptide is E3 UFM1-protein ligase 1 homolog (Drosophila pseudoobscura pseudoobscura (Fruit fly)).